Consider the following 320-residue polypeptide: Ferrochelatase (320 aa).

2 residues coordinate Fe cation: H194 and E275.

This sequence belongs to the ferrochelatase family. In terms of assembly, monomer.

It is found in the cytoplasm. It carries out the reaction heme b + 2 H(+) = protoporphyrin IX + Fe(2+). It functions in the pathway porphyrin-containing compound metabolism; protoheme biosynthesis; protoheme from protoporphyrin-IX: step 1/1. Catalyzes the ferrous insertion into protoporphyrin IX. The polypeptide is Ferrochelatase (Escherichia coli (strain 55989 / EAEC)).